We begin with the raw amino-acid sequence, 156 residues long: ATP synthase subunit b (156 aa).

Residues 7-27 traverse the membrane as a helical segment; sequence FFAQMVVFFILWWVVAKFIWP.

Belongs to the ATPase B chain family. As to quaternary structure, F-type ATPases have 2 components, F(1) - the catalytic core - and F(0) - the membrane proton channel. F(1) has five subunits: alpha(3), beta(3), gamma(1), delta(1), epsilon(1). F(0) has three main subunits: a(1), b(2) and c(10-14). The alpha and beta chains form an alternating ring which encloses part of the gamma chain. F(1) is attached to F(0) by a central stalk formed by the gamma and epsilon chains, while a peripheral stalk is formed by the delta and b chains.

It localises to the cell inner membrane. F(1)F(0) ATP synthase produces ATP from ADP in the presence of a proton or sodium gradient. F-type ATPases consist of two structural domains, F(1) containing the extramembraneous catalytic core and F(0) containing the membrane proton channel, linked together by a central stalk and a peripheral stalk. During catalysis, ATP synthesis in the catalytic domain of F(1) is coupled via a rotary mechanism of the central stalk subunits to proton translocation. Its function is as follows. Component of the F(0) channel, it forms part of the peripheral stalk, linking F(1) to F(0). The sequence is that of ATP synthase subunit b from Cupriavidus taiwanensis (strain DSM 17343 / BCRC 17206 / CCUG 44338 / CIP 107171 / LMG 19424 / R1) (Ralstonia taiwanensis (strain LMG 19424)).